The chain runs to 182 residues: Ribosome-recycling factor (182 aa).

This sequence belongs to the RRF family.

The protein localises to the cytoplasm. Responsible for the release of ribosomes from messenger RNA at the termination of protein biosynthesis. May increase the efficiency of translation by recycling ribosomes from one round of translation to another. The polypeptide is Ribosome-recycling factor (Gloeobacter violaceus (strain ATCC 29082 / PCC 7421)).